Reading from the N-terminus, the 469-residue chain is Endoplasmic reticulum oxidoreductin-1 (469 aa).

An N-terminal signal peptide occupies residues 1–36; that stretch reads MGKGAIKEEESEKKRKTWRWPLATLVVVFLAVAVSS. 6 disulfide bridges follow: Cys-52/Cys-71, Cys-54/Cys-69, Cys-108/Cys-372, Cys-117/Cys-122, Cys-222/Cys-231, and Cys-375/Cys-378. Residues Arg-201, Thr-203, and Trp-214 each coordinate FAD. Residues Ser-242, His-245, Arg-275, and Arg-282 each coordinate FAD. Asn-365 carries N-linked (GlcNAc...) asparagine glycosylation.

Belongs to the EROs family. May function both as a monomer and a homodimer. It depends on FAD as a cofactor. In terms of processing, N-glycosylated.

Its subcellular location is the endoplasmic reticulum membrane. Functionally, essential oxidoreductase that oxidizes proteins in the endoplasmic reticulum to produce disulfide bonds. Acts by oxidizing directly PDI isomerase through a direct disulfide exchange. Does not act as a direct oxidant of folding substrate, but relies on PDI to transfer oxidizing equivalent. Does not oxidize all PDI related proteins, suggesting that it can discriminate between PDI and related proteins. Its reoxidation probably involves electron transfer to molecular oxygen via FAD. Acts independently of glutathione. May be responsible for a significant proportion of reactive oxygen species (ROS) in the cell, thereby being a source of oxidative stress. The polypeptide is Endoplasmic reticulum oxidoreductin-1 (AERO1) (Arabidopsis thaliana (Mouse-ear cress)).